A 1244-amino-acid chain; its full sequence is MHIKSIHLDGFKSYQKHTDILDFSPTFNAITGYNGSGKSNILDSICFIMGINKLDNIRAKSMHELISHGGTKAIVQVRFDNTDKRCSPFGMEHLDEIVVQRIITAQATGKGCATSYTLNGHAATNGKMQDFFRGVGLNVNNPHFLIMQGRITTVLNMKPEEILGMVEEAAGTKMYDQKKKDAEKTMFLKDAKLKEVDRIFQSSIDPRMVKFREDRKNMVEVTRLKKLKENFSRKYEAFQYFQTCEAVKKSAKEIEDAKKGIEDLGEKFNQLDLDLKNKEDEKKKMEESRDDQHEEAALSAAHLSKQSIMLQKETVKNQLVETINKLKKEGEQINKSLSKDREVLDAKRKEHEDSKAANSKDIQSQSDDEALVTKYRNDLESLTRGTIANDKGEHVSIESEIQSCKSTASQMSSGITAAKKRGERLHNQIKHLEGEKATLSARSKSDIGSADNYQKEVDEINKQLQLLGFNIDADTEKREHAAKLHESITKLKDMDTRLLNSYKDGRYALNYQRPPLHIDKFDEKRDVFGYVAHLIKMKPGCEQFAVAADIALGGVLGNVVVSTQDIARILIDGKAFTSRKTMIPVSENARNASSYNTLPDVKLRRAKEIAEKYNDTVTKMIDLIEYPDFISNTILNAVGQILVVDSLDVAREIAYDEVAKTRMITRRGDDVRTNGIMTGGYNDPGNKPALIALEPMYARRPQIEAQQRELDALNRELQLTEASSQKCRDLNNQLATAMRKLAQVKTNINNSEFGIVVRDLKVHSEEYEKNQAEIEATVKTLKDVEDKIKTLESMKNKDKNSQEKRKKELTALLQKAEQTVAQNKNRGEKARREVMLLQATVEEMEKTIKKDEGIWEQKKKECDELEEKLPNAIAALKDAELEQKAAQAKLNDLKNNQRQISTRLGKIAKECDALIREKAKTKSKREEKEKELTSLQQSEASNRKEARSKLKKFEWLSDEEAHFNKKGGLYDFEGYTVSKGKDEIKELTDKIETLERSCCIQNVSNLDTCEAKVLDIKNKRERITEDFNMLKKTIATLDKKKVDELIRAHESVNKDFGQIFNCLLPDAHASLVPPEGKTVCEGLEVKVSFGGVVKDSLHELSGGQRSLVALSLILAMLKFKPAPLYILDEVDAALDLSHTANIGMMIKTHFHHNQFIIVSLKQGMFSNADVLFQTRFADGHSTCTRLNGGDIAVLCQDKVLQAQALELTDAGKAKKDAAAKKGAQKNDKEPPKKKPIVVDDDDFE.

32–39 (GYNGSGKS) is an ATP binding site. A coiled-coil region spans residues 247 to 355 (VKKSAKEIED…AKRKEHEDSK (109 aa)). The segment covering 337–355 (LSKDREVLDAKRKEHEDSK) has biased composition (basic and acidic residues). A disordered region spans residues 337–369 (LSKDREVLDAKRKEHEDSKAANSKDIQSQSDDE). The segment covering 356–365 (AANSKDIQSQ) has biased composition (polar residues). Positions 415-472 (ITAAKKRGERLHNQIKHLEGEKATLSARSKSDIGSADNYQKEVDEINKQLQLLGFNID) form a coiled coil. Residues 526–654 (DVFGYVAHLI…DSLDVAREIA (129 aa)) enclose the SMC hinge domain. 2 coiled-coil regions span residues 701-946 (PQIE…RKEA) and 975-1037 (YTVS…IATL). Residues 919-932 (AKTKSKREEKEKEL) show a composition bias toward basic and acidic residues. A disordered region spans residues 919–943 (AKTKSKREEKEKELTSLQQSEASNR). The segment covering 1216–1232 (DAAAKKGAQKNDKEPPK) has biased composition (basic and acidic residues). Positions 1216–1244 (DAAAKKGAQKNDKEPPKKKPIVVDDDDFE) are disordered.

The protein belongs to the SMC family. SMC2 subfamily. In terms of assembly, component of the condensin I complex, which contains the mix-1/SMC2 and smc-4/SMC4 heterodimer, and three non SMC subunits that probably regulate the complex: dpy-26, capg-1 and dpy-28. Within the complex, interacts with smc-4, dpy-26, dpy-28 and capg-1. Interaction with smc-4 is required for mitotic chromosome localization. Component of the condensin II complex, which contains the mix-1/SMC2 and smc-4/SMC4 heterodimer, and three non SMC subunits, capg-2, kle-2 and hcp-6 that probably regulate the complex. Within the complex, interacts with smc-4, capg-2, kle-2 and hcp-6. Also a component of the condensin-like dosage compensation complex, which contains the mix-1/SMC2 and dpy-27/SMC4 heterodimer, and three non SMC subunits that probably regulate the complex: dpy-26, capg-1 and dpy-28. Within the complex, interacts with dpy-27, dpy-26, capg-1 and dpy-28. Requires capg-1 for hermaphrodite X chromosome localization. Interacts with smcl-1. In terms of tissue distribution, expressed in embryos and in adult somatic and germline tissues (at protein level).

It is found in the nucleus. Its subcellular location is the chromosome. Functionally, essential protein required for both chromosome condensation and segregation and X-chromosome dosage compensation depending on its binding partners. Central component of the condensin I complex, a complex required for conversion of interphase chromatin into mitotic-like condense chromosomes. The condensin complex introduces positive supercoils into relaxed DNA in the presence of type I topoisomerases. Converts nicked DNA into positive knotted forms in the presence of type II topoisomerases. Central component of the condensin II complex, a complex that seems to play a role in prophase chromosome condensation and organization. Both the condensin complex I and II play a role in meiotic and mitotic chromosome segregation. Plays a role in robust cytokinesis upon the presence of chromatin obstructions. Also a member of the condensin I-like dosage compensation complex that associates specifically with hermaphrodite X chromosomes to reduce their gene transcription during interphase. The protein is Mitotic chromosome and X-chromosome-associated protein mix-1 (mix-1) of Caenorhabditis elegans.